Reading from the N-terminus, the 529-residue chain is Listeriolysin O (529 aa).

Positions 1–24 (MKKIMLVFITLILVSLPIAQQTEA) are cleaved as a signal peptide. Residues 35–54 (SISSMAPPASPPASPKTPIE) are disordered. Beta stranded transmembrane passes span 214–227 (ESQLIAKFGTAFKA), 234–243 (VNFGAISEGK), 312–321 (STKVKAAFDA), and 329–341 (SGDVELTNIIKNS). Positions 483–493 (ECTGLAWEWWR) match the Conserved undecapeptide motif. Positions 515–516 (TL) match the Cholesterol binding motif.

Belongs to the cholesterol-dependent cytolysin family. In terms of assembly, homooligomeric pore complex of 35 to 50 subunits; when inserted in the host membrane.

It localises to the secreted. Its subcellular location is the host membrane. The protein resides in the host cell membrane. Its activity is regulated as follows. Activity of listeriolysin O is regulated on multiple levels. It should be high in the phagosome, thereby allowing escape of the bacteria from the phagosomal compartment. Then, once inside the host cytosol, the activity must be controlled to prevent lysis of the host plasma membrane and loss of the intracellular environment. In terms of biological role, a cholesterol-dependent toxin that causes cytolysis by forming pores in cholesterol containing host membranes. After binding to target membranes, the protein undergoes a major conformation change, leading to its insertion in the host membrane and formation of an oligomeric pore complex. Cholesterol is required for binding to host membranes, membrane insertion and pore formation; cholesterol binding is mediated by a Thr-Leu pair in the C-terminus. Acts as a major virulence factor required for the escape of bacteria from phagosomal vacuoles and entry into the host cytosol. Can be reversibly inactivated by oxidation. This Listeria monocytogenes serotype 1/2a (strain 08-5578) protein is Listeriolysin O (hly).